The following is a 752-amino-acid chain: Double zinc ribbon and ankyrin repeat-containing protein 1 (752 aa).

2 DZANK-type zinc fingers span residues C210–E270 and C338–G386. The span at K448–P469 shows a compositional bias: basic and acidic residues. Disordered regions lie at residues K448–L471 and P536–E614. The segment covering P536–S554 has biased composition (low complexity). Over residues E555–S580 the composition is skewed to polar residues. Residues P600–E614 show a composition bias toward basic and acidic residues. ANK repeat units follow at residues D638 to Q667, L672 to K703, and R707 to L737.

It is found in the cytoplasm. It localises to the cytoskeleton. The protein resides in the microtubule organizing center. Its subcellular location is the centrosome. The protein localises to the cilium basal body. Functionally, required for the intracellular transport of organelles and vesicles, and is essential for the photoreceptor's outer segments formation, maintenance and function. In Danio rerio (Zebrafish), this protein is Double zinc ribbon and ankyrin repeat-containing protein 1 (dzank1).